A 322-amino-acid chain; its full sequence is Peptidase 1 (322 aa).

The signal sequence occupies residues 1 to 18; the sequence is MKFVLAIASLLVLSVVYA. A propeptide spanning residues 19 to 99 is cleaved from the precursor; that stretch reads YPSEIRTFEE…LKKEFDLDAG (81 aa). The cysteines at positions 131 and 171 are disulfide-linked. Cys134 is a catalytic residue. A glycan (N-linked (GlcNAc...) asparagine) is linked at Asn152. Catalysis depends on residues His270 and Asn290.

This sequence belongs to the peptidase C1 family. In terms of tissue distribution, expressed in the gut.

It localises to the secreted. It carries out the reaction Broad endopeptidase specificity.. In terms of biological role, probable thiol protease. The sequence is that of Peptidase 1 from Psoroptes ovis (Sheep scab mite).